The sequence spans 113 residues: Large ribosomal subunit protein bL19m (113 aa).

The protein belongs to the bacterial ribosomal protein bL19 family.

It localises to the mitochondrion. The polypeptide is Large ribosomal subunit protein bL19m (RPL19) (Reclinomonas americana).